A 260-amino-acid polypeptide reads, in one-letter code: 3-deoxy-manno-octulosonate cytidylyltransferase (260 aa).

The protein belongs to the KdsB family.

The protein localises to the cytoplasm. It carries out the reaction 3-deoxy-alpha-D-manno-oct-2-ulosonate + CTP = CMP-3-deoxy-beta-D-manno-octulosonate + diphosphate. It functions in the pathway nucleotide-sugar biosynthesis; CMP-3-deoxy-D-manno-octulosonate biosynthesis; CMP-3-deoxy-D-manno-octulosonate from 3-deoxy-D-manno-octulosonate and CTP: step 1/1. Its pathway is bacterial outer membrane biogenesis; lipopolysaccharide biosynthesis. Functionally, activates KDO (a required 8-carbon sugar) for incorporation into bacterial lipopolysaccharide in Gram-negative bacteria. In Polaromonas naphthalenivorans (strain CJ2), this protein is 3-deoxy-manno-octulosonate cytidylyltransferase.